Here is a 160-residue protein sequence, read N- to C-terminus: Cytochrome b6-f complex subunit 4 (160 aa).

The next 3 helical transmembrane spans lie at 36–56 (LLYV…GLAV), 95–115 (LLGI…PFIE), and 131–151 (AVFL…TFPI).

The protein belongs to the cytochrome b family. PetD subfamily. In terms of assembly, the 4 large subunits of the cytochrome b6-f complex are cytochrome b6, subunit IV (17 kDa polypeptide, PetD), cytochrome f and the Rieske protein, while the 4 small subunits are PetG, PetL, PetM and PetN. The complex functions as a dimer.

Its subcellular location is the cellular thylakoid membrane. Component of the cytochrome b6-f complex, which mediates electron transfer between photosystem II (PSII) and photosystem I (PSI), cyclic electron flow around PSI, and state transitions. The protein is Cytochrome b6-f complex subunit 4 of Crocosphaera subtropica (strain ATCC 51142 / BH68) (Cyanothece sp. (strain ATCC 51142)).